The primary structure comprises 339 residues: O-methyltransferase 7 (339 aa).

The S-adenosyl-L-methionine site is built by Gly186, Asp209, Ser232, Phe233, and Lys246. His250 acts as the Proton acceptor in catalysis.

Belongs to the class I-like SAM-binding methyltransferase superfamily. Cation-independent O-methyltransferase family. COMT subfamily.

The catalysed reaction is (3,5-dichloro-2,4,6-trihydroxyphenyl)hexan-1-one + S-adenosyl-L-methionine = 1-(3,5-dichloro-2,6-dihydroxy-4-methoxyphenyl)hexan-1-one + S-adenosyl-L-homocysteine + H(+). In Dictyostelium discoideum (Social amoeba), this protein is O-methyltransferase 7 (omt7).